The primary structure comprises 132 residues: Small ribosomal subunit protein uS8 (132 aa).

Belongs to the universal ribosomal protein uS8 family. Part of the 30S ribosomal subunit. Contacts proteins S5 and S12.

One of the primary rRNA binding proteins, it binds directly to 16S rRNA central domain where it helps coordinate assembly of the platform of the 30S subunit. The chain is Small ribosomal subunit protein uS8 from Bartonella bacilliformis (strain ATCC 35685 / KC583 / Herrer 020/F12,63).